A 484-amino-acid polypeptide reads, in one-letter code: Putative beta-barrel assembly-enhancing protease (484 aa).

The N-terminal stretch at 1 to 23 (MKFFPTRTLLCLCIAAPCLPAIA) is a signal peptide. Position 133 (His133) interacts with Zn(2+). The active site involves Glu134. His137 and Glu198 together coordinate Zn(2+). Residue Asp202 is the Proton donor of the active site. TPR repeat units lie at residues 307-340 (PSIQ…QPDN), 341-374 (HFYL…TPNN), 376-408 (VLTI…NPND), and 426-459 (AEDL…VELG).

Belongs to the peptidase M48 family. BepA subfamily. Zn(2+) is required as a cofactor.

The protein resides in the periplasm. Its function is as follows. Functions both as a chaperone and a metalloprotease. Maintains the integrity of the outer membrane by promoting either the assembly or the elimination of outer membrane proteins, depending on their folding state. The polypeptide is Putative beta-barrel assembly-enhancing protease (Vibrio cholerae serotype O1 (strain ATCC 39315 / El Tor Inaba N16961)).